The primary structure comprises 337 residues: Glyceraldehyde-3-phosphate dehydrogenase, cytosolic (337 aa).

Residues 13-14, D35, and R82 each bind NAD(+); that span reads RI. D-glyceraldehyde 3-phosphate-binding positions include 153-155, T184, 213-214, and R236; these read SCT and TG. C154 serves as the catalytic Nucleophile. NAD(+) is bound at residue N318.

It belongs to the glyceraldehyde-3-phosphate dehydrogenase family. Homotetramer.

The protein resides in the cytoplasm. It carries out the reaction D-glyceraldehyde 3-phosphate + phosphate + NAD(+) = (2R)-3-phospho-glyceroyl phosphate + NADH + H(+). It functions in the pathway carbohydrate degradation; glycolysis; pyruvate from D-glyceraldehyde 3-phosphate: step 1/5. In terms of biological role, key enzyme in glycolysis that catalyzes the first step of the pathway by converting D-glyceraldehyde 3-phosphate (G3P) into 3-phospho-D-glyceroyl phosphate. Essential for the maintenance of cellular ATP levels and carbohydrate metabolism. The sequence is that of Glyceraldehyde-3-phosphate dehydrogenase, cytosolic (GAPC) from Craterostigma plantagineum (Blue gem).